A 149-amino-acid chain; its full sequence is Large ribosomal subunit protein uL11 (149 aa).

It belongs to the universal ribosomal protein uL11 family. In terms of assembly, part of the ribosomal stalk of the 50S ribosomal subunit. Interacts with L10 and the large rRNA to form the base of the stalk. L10 forms an elongated spine to which L12 dimers bind in a sequential fashion forming a multimeric L10(L12)X complex. Post-translationally, one or more lysine residues are methylated.

Its function is as follows. Forms part of the ribosomal stalk which helps the ribosome interact with GTP-bound translation factors. The polypeptide is Large ribosomal subunit protein uL11 (Methylorubrum extorquens (strain CM4 / NCIMB 13688) (Methylobacterium extorquens)).